A 739-amino-acid chain; its full sequence is DEAD-box ATP-dependent RNA helicase 32 (739 aa).

The Q motif motif lies at 71–99 (RKFAQLPISDKTKRGLKDAKYVDMTDVQS). In terms of domain architecture, Helicase ATP-binding spans 102-277 (IPHALCGRDI…RLSLRDPEYI (176 aa)). 115–122 (ARTGSGKT) contributes to the ATP binding site. The DEAD box motif lies at 225-228 (DEAD). The 159-residue stretch at 303-461 (KLDMLWSFIK…EVSRLLAALL (159 aa)) folds into the Helicase C-terminal domain. A coiled-coil region spans residues 643-689 (GAEMRKADIEDKKVDKERRREKRMKQKIKRKRGAMEDEEEEEEEDHD). Positions 656–725 (VDKERRREKR…GGKINTDSLS (70 aa)) are disordered. Residues 661–674 (RREKRMKQKIKRKR) are compositionally biased toward basic residues. The span at 678-688 (EDEEEEEEEDH) shows a compositional bias: acidic residues.

It belongs to the DEAD box helicase family. DDX10/DBP4 subfamily.

It catalyses the reaction ATP + H2O = ADP + phosphate + H(+). The polypeptide is DEAD-box ATP-dependent RNA helicase 32 (RH32) (Arabidopsis thaliana (Mouse-ear cress)).